Here is a 102-residue protein sequence, read N- to C-terminus: Small ribosomal subunit protein uS10 (102 aa).

The protein belongs to the universal ribosomal protein uS10 family. As to quaternary structure, part of the 30S ribosomal subunit.

Its function is as follows. Involved in the binding of tRNA to the ribosomes. This is Small ribosomal subunit protein uS10 from Limosilactobacillus reuteri (strain DSM 20016) (Lactobacillus reuteri).